The primary structure comprises 506 residues: Maturase K (506 aa).

This sequence belongs to the intron maturase 2 family. MatK subfamily.

Its subcellular location is the plastid. The protein resides in the chloroplast. Usually encoded in the trnK tRNA gene intron. Probably assists in splicing its own and other chloroplast group II introns. In Lathyrus tingitanus (Tangier pea), this protein is Maturase K.